Consider the following 437-residue polypeptide: Vasoactive intestinal polypeptide receptor 2 (437 aa).

The signal sequence occupies residues 1–22; the sequence is MRASVVLTCYCWLLVRVSSIHP. Topologically, residues 23–123 are extracellular; that stretch reads ECRFHLEIQE…EDESKITFYI (101 aa). 3 disulfides stabilise this stretch: Cys37–Cys60, Cys51–Cys92, and Cys74–Cys108. Asn57, Asn87, and Asn91 each carry an N-linked (GlcNAc...) asparagine glycan. A helical membrane pass occupies residues 124–149; it reads LVKAIYTLGYSVSLMSLTTGSIIICL. Over 150-157 the chain is Cytoplasmic; it reads FRKLHCTR. The chain crosses the membrane as a helical span at residues 158–179; that stretch reads NYIHLNLFLSFMLRAISVLVKD. Residues 180 to 202 lie on the Extracellular side of the membrane; it reads SVLYSSSGTLRCHDQPGSWVGCK. A disulfide bond links Cys201 and Cys270. Residues 203 to 227 traverse the membrane as a helical segment; sequence LSLVFFQYCIMANFYWLLVEGLYLH. At 228 to 238 the chain is on the cytoplasmic side; sequence TLLVAILPPSR. The helical transmembrane segment at 239–260 threads the bilayer; the sequence is CFLAYLLIGWGIPSVCIGAWIA. Over 261 to 279 the chain is Extracellular; the sequence is TRLSLEDTGCWDTNDHSIP. A helical membrane pass occupies residues 280 to 303; sequence WWVIRMPILISIVVNFALFISIVR. Topologically, residues 304 to 324 are cytoplasmic; that stretch reads ILLQKLTSPDVGGNDQSQYKR. A helical transmembrane segment spans residues 325–345; it reads LAKSTLLLIPLFGVHYMVFAA. Residues 346–353 lie on the Extracellular side of the membrane; that stretch reads FPIGISST. The helical transmembrane segment at 354–377 threads the bilayer; sequence YQILFELCVGSFQGLVVAVLYCFL. The Cytoplasmic segment spans residues 378 to 437; the sequence is NSEVQCELKRRWRGLCLTQPGSRDYRLHSWSMSRNGSESALQIHRGSRTQSFLQSETSVI.

Belongs to the G-protein coupled receptor 2 family. In terms of assembly, interacts with ADCYAP1/PACAP (via N-terminal extracellular domain); activated by PACAP27 and CAPAC38 neuropeptides. Interacts with VIP; the interaction results in VIPR1 activation. Mainly in the thalamus, hippocampus and in the suprachiasmatic nucleus.

The protein resides in the cell membrane. G protein-coupled receptor activated by the neuropeptides vasoactive intestinal peptide (VIP) and pituitary adenylate cyclase-activating polypeptide (ADCYAP1/PACAP). Binds VIP and both PACAP27 and PACAP38 bioactive peptides with the order of ligand affinity of VIP = PACAP38 &gt; PACAP27. Ligand binding causes a conformation change that triggers signaling via guanine nucleotide-binding proteins (G proteins) and modulates the activity of downstream effectors. Activates cAMP-dependent pathway. May be coupled to phospholipase C. This Rattus norvegicus (Rat) protein is Vasoactive intestinal polypeptide receptor 2.